The following is a 1291-amino-acid chain: Cytoplasmic FMR1-interacting protein (1291 aa).

The interval 1269-1291 is disordered; it reads HPSVISSSSHYQDPQKLRQSMNN. Residues 1271-1291 are compositionally biased toward polar residues; it reads SVISSSSHYQDPQKLRQSMNN.

Belongs to the CYFIP family. Interacts with Fmr1 and Rac1. Component of the WAVE complex composed of Hem/Kette, Scar/Wave and Cyfip where it binds through its C-terminus directly to Hem.

The protein localises to the cytoplasm. In terms of biological role, plays a role in guidance and morphology of central and peripheral axons and in synaptic morphology. Also required for formation of cell membrane protrusions and for bristle development. The protein is Cytoplasmic FMR1-interacting protein of Drosophila pseudoobscura pseudoobscura (Fruit fly).